Here is a 383-residue protein sequence, read N- to C-terminus: Ribosomal RNA large subunit methyltransferase G (383 aa).

The protein belongs to the methyltransferase superfamily. RlmG family.

It localises to the cytoplasm. The catalysed reaction is guanosine(1835) in 23S rRNA + S-adenosyl-L-methionine = N(2)-methylguanosine(1835) in 23S rRNA + S-adenosyl-L-homocysteine + H(+). In terms of biological role, specifically methylates the guanine in position 1835 (m2G1835) of 23S rRNA. The chain is Ribosomal RNA large subunit methyltransferase G from Shewanella denitrificans (strain OS217 / ATCC BAA-1090 / DSM 15013).